Reading from the N-terminus, the 200-residue chain is 3-isopropylmalate dehydratase small subunit (200 aa).

This sequence belongs to the LeuD family. LeuD type 1 subfamily. In terms of assembly, heterodimer of LeuC and LeuD.

The enzyme catalyses (2R,3S)-3-isopropylmalate = (2S)-2-isopropylmalate. Its pathway is amino-acid biosynthesis; L-leucine biosynthesis; L-leucine from 3-methyl-2-oxobutanoate: step 2/4. Its function is as follows. Catalyzes the isomerization between 2-isopropylmalate and 3-isopropylmalate, via the formation of 2-isopropylmaleate. This chain is 3-isopropylmalate dehydratase small subunit, found in Campylobacter jejuni subsp. jejuni serotype O:6 (strain 81116 / NCTC 11828).